The following is a 280-amino-acid chain: 2-dehydro-3-deoxyphosphooctonate aldolase (280 aa).

This sequence belongs to the KdsA family.

It is found in the cytoplasm. It catalyses the reaction D-arabinose 5-phosphate + phosphoenolpyruvate + H2O = 3-deoxy-alpha-D-manno-2-octulosonate-8-phosphate + phosphate. The protein operates within carbohydrate biosynthesis; 3-deoxy-D-manno-octulosonate biosynthesis; 3-deoxy-D-manno-octulosonate from D-ribulose 5-phosphate: step 2/3. It participates in bacterial outer membrane biogenesis; lipopolysaccharide biosynthesis. The sequence is that of 2-dehydro-3-deoxyphosphooctonate aldolase from Pseudomonas putida (strain W619).